Reading from the N-terminus, the 337-residue chain is tRNA N6-adenosine threonylcarbamoyltransferase (337 aa).

Fe cation-binding residues include H110 and H114. Substrate-binding positions include 133–137, D166, G179, and N271; that span reads LVSGK. Position 300 (D300) interacts with Fe cation.

Belongs to the KAE1 / TsaD family. Requires Fe(2+) as cofactor.

The protein resides in the cytoplasm. The enzyme catalyses L-threonylcarbamoyladenylate + adenosine(37) in tRNA = N(6)-L-threonylcarbamoyladenosine(37) in tRNA + AMP + H(+). Required for the formation of a threonylcarbamoyl group on adenosine at position 37 (t(6)A37) in tRNAs that read codons beginning with adenine. Is involved in the transfer of the threonylcarbamoyl moiety of threonylcarbamoyl-AMP (TC-AMP) to the N6 group of A37, together with TsaE and TsaB. TsaD likely plays a direct catalytic role in this reaction. The protein is tRNA N6-adenosine threonylcarbamoyltransferase of Buchnera aphidicola subsp. Schizaphis graminum (strain Sg).